Here is an 845-residue protein sequence, read N- to C-terminus: Envelope glycoprotein gp160 (845 aa).

An N-terminal signal peptide occupies residues 1-28 (METQRNYPSLWRWGTLILGMLLICSAAQ). At 29-673 (NLWVTVYYGV…ISHWLWYIKI (645 aa)) the chain is on the extracellular side. A disulfide bridge links cysteine 50 with cysteine 70. N-linked (GlcNAc...) asparagine; by host glycans are attached at residues asparagine 84, asparagine 126, asparagine 132, asparagine 133, asparagine 136, asparagine 149, asparagine 153, asparagine 179, asparagine 180, asparagine 190, asparagine 223, asparagine 227, asparagine 234, asparagine 255, asparagine 269, asparagine 286, asparagine 294, asparagine 324, asparagine 331, and asparagine 347. 5 disulfide bridges follow: cysteine 115–cysteine 198, cysteine 122–cysteine 189, cysteine 127–cysteine 150, cysteine 211–cysteine 240, and cysteine 221–cysteine 232. The V1 stretch occupies residues 127 to 149 (CTNVRNNTSNSTSSMEAGGELTN). A V2 region spans residues 150 to 189 (CSFNVTTVLRDKQQKVHALFYRLDVVPIDNNSTQYRLINC). The V3 stretch occupies residues 289–322 (CTRPNNNTRTSIHLGPGRAFYATGDIIGDIRQAH). The cysteines at positions 289 and 323 are disulfide-linked. Residues 355–365 (NSGGDMEVRTH) form a CD4-binding loop region. Disulfide bonds link cysteine 369–cysteine 434 and cysteine 376–cysteine 407. The interval 376-407 (CNTSGLFNSSWEMHTNYTSNDTKGNENITLPC) is V4. N-linked (GlcNAc...) asparagine; by host glycosylation is found at asparagine 377, asparagine 383, asparagine 391, asparagine 395, asparagine 402, asparagine 437, asparagine 449, and asparagine 454. V5 regions lie at residues 450-460 (ASAENYTFRPG) and 452-460 (AENYTFRPG). The segment at 501–521 (AVGMGASFLGFLGAAGSTMGA) is fusion peptide. The immunosuppression stretch occupies residues 563 to 581 (KQLQARVLAVERYLRDQQL). Cysteine 587 and cysteine 593 are disulfide-bonded. 4 N-linked (GlcNAc...) asparagine; by host glycosylation sites follow: asparagine 600, asparagine 605, asparagine 614, and asparagine 626. Residues 622-656 (KQISNYTEEIYRLLEVSQTQQEKNEQDLLALDKWA) adopt a coiled-coil conformation. Positions 651-672 (ALDKWASLWTWFDISHWLWYIK) are MPER; binding to GalCer. Residues 674–694 (FIMIVGGLIGLRIIFAVLSIV) form a helical membrane-spanning segment. Over 695–845 (NRVRQGYSPL…IRQGFERSLL (151 aa)) the chain is Cytoplasmic. The YXXL motif; contains endocytosis signal signature appears at 701–704 (YSPL). The interval 708–731 (TLVPNPRGPDRPEGTEEGGGEQDR) is disordered. A Di-leucine internalization motif motif is present at residues 844 to 845 (LL).

It belongs to the HIV-1 env protein family. The mature envelope protein (Env) consists of a homotrimer of non-covalently associated gp120-gp41 heterodimers. The resulting complex protrudes from the virus surface as a spike. There seems to be as few as 10 spikes on the average virion. Interacts with host CD4, CCR5 and CXCR4. Gp120 also interacts with the C-type lectins CD209/DC-SIGN and CLEC4M/DC-SIGNR (collectively referred to as DC-SIGN(R)). Gp120 and gp41 interact with GalCer. Gp120 interacts with host ITGA4/ITGB7 complex; on CD4+ T-cells, this interaction results in rapid activation of integrin ITGAL/LFA-1, which facilitates efficient cell-to-cell spreading of HIV-1. Gp120 interacts with cell-associated heparan sulfate; this interaction increases virus infectivity on permissive cells and may be involved in infection of CD4- cells. As to quaternary structure, the mature envelope protein (Env) consists of a homotrimer of non-covalently associated gp120-gp41 heterodimers. The resulting complex protrudes from the virus surface as a spike. There seems to be as few as 10 spikes on the average virion. In terms of processing, highly glycosylated by host. The high number of glycan on the protein is reffered to as 'glycan shield' because it contributes to hide protein sequence from adaptive immune system. Palmitoylation of the transmembrane protein and of Env polyprotein (prior to its proteolytic cleavage) is essential for their association with host cell membrane lipid rafts. Palmitoylation is therefore required for envelope trafficking to classical lipid rafts, but not for viral replication. Post-translationally, specific enzymatic cleavages in vivo yield mature proteins. Envelope glycoproteins are synthesized as an inactive precursor that is heavily N-glycosylated and processed likely by host cell furin in the Golgi to yield the mature SU and TM proteins. The cleavage site between SU and TM requires the minimal sequence [KR]-X-[KR]-R. About 2 of the 9 disulfide bonds of gp41 are reduced by P4HB/PDI, following binding to CD4 receptor.

Its subcellular location is the virion membrane. It is found in the host cell membrane. The protein resides in the host endosome membrane. Functionally, oligomerizes in the host endoplasmic reticulum into predominantly trimers. In a second time, gp160 transits in the host Golgi, where glycosylation is completed. The precursor is then proteolytically cleaved in the trans-Golgi and thereby activated by cellular furin or furin-like proteases to produce gp120 and gp41. Its function is as follows. Attaches the virus to the host lymphoid cell by binding to the primary receptor CD4. This interaction induces a structural rearrangement creating a high affinity binding site for a chemokine coreceptor like CXCR4 and/or CCR5. Acts as a ligand for CD209/DC-SIGN and CLEC4M/DC-SIGNR, which are respectively found on dendritic cells (DCs), and on endothelial cells of liver sinusoids and lymph node sinuses. These interactions allow capture of viral particles at mucosal surfaces by these cells and subsequent transmission to permissive cells. HIV subverts the migration properties of dendritic cells to gain access to CD4+ T-cells in lymph nodes. Virus transmission to permissive T-cells occurs either in trans (without DCs infection, through viral capture and transmission), or in cis (following DCs productive infection, through the usual CD4-gp120 interaction), thereby inducing a robust infection. In trans infection, bound virions remain infectious over days and it is proposed that they are not degraded, but protected in non-lysosomal acidic organelles within the DCs close to the cell membrane thus contributing to the viral infectious potential during DCs' migration from the periphery to the lymphoid tissues. On arrival at lymphoid tissues, intact virions recycle back to DCs' cell surface allowing virus transmission to CD4+ T-cells. Acts as a class I viral fusion protein. Under the current model, the protein has at least 3 conformational states: pre-fusion native state, pre-hairpin intermediate state, and post-fusion hairpin state. During fusion of viral and target intracellular membranes, the coiled coil regions (heptad repeats) assume a trimer-of-hairpins structure, positioning the fusion peptide in close proximity to the C-terminal region of the ectodomain. The formation of this structure appears to drive apposition and subsequent fusion of viral and target cell membranes. Complete fusion occurs in host cell endosomes and is dynamin-dependent, however some lipid transfer might occur at the plasma membrane. The virus undergoes clathrin-dependent internalization long before endosomal fusion, thus minimizing the surface exposure of conserved viral epitopes during fusion and reducing the efficacy of inhibitors targeting these epitopes. Membranes fusion leads to delivery of the nucleocapsid into the cytoplasm. The polypeptide is Envelope glycoprotein gp160 (Homo sapiens (Human)).